We begin with the raw amino-acid sequence, 258 residues long: Regulatory protein RecX (258 aa).

This sequence belongs to the RecX family.

Its subcellular location is the cytoplasm. Its function is as follows. Modulates RecA activity. The protein is Regulatory protein RecX of Streptococcus pyogenes serotype M2 (strain MGAS10270).